A 721-amino-acid chain; its full sequence is MEGQNKSITFDGREIRLTTGLYAPQASGSVMIECGDTSLLVTATKTTKKEASDFLPLICDYEEKLYAAGRIPGGFMRREGRPPERATLISRLIDRPMRPLFPTWMRDEIQIVASCLSLDERVPADVLAVTGASIATLLGEIPFYGPMAAVRVGLIGDDFILNPSYREIEKGDLDIVVAGSPDGIVMIEAGANQLSEQDTIEAIDFGYEAVTELIKSQEDLLKDLGIKQIKPSDPEEDKTLPSYLEKNCSKAIDLVLKKFDQSKEERDLELEKIKTETQSKIDSLKDDNEVRVLTSENEKLIHSDFKKLTKKLMRSQIINDGKRVDGRELDEVRKITASAGILPKRVHGSALFQRGLTQVLSTTTLGTPSDAQEMDDLNPSTEKTYLHHYNFPPYSVGETRPMRTPGRREIGHGALAERAIIPVLPGKETFPYVLRVVSEVLSSNGSTSMGSVCGSTLSLLDAGVPLKAPVGGTAMGLIKEGKDVRILTDIQGIEDFLGDMDFKVAGTNKGITALQMDMKITGLPVSIISDAIKKARPARLHILEKMQEAIDKPQESLSPHAPRLLSFRIDPELIGTVIGPGGRTIKGITERTNTKIDIEDGGIVTIASHDGAAAEEAQKIIEGLTRKVHEGEIFSGVVTRIIPIGAFVEILPGKEGMVHISQLSEARVERVEDVVRQGDEVTVRVREIDSRGRINLTLRGVGQNNGMSYPEPTPTPVAPLN.

Mg(2+)-binding residues include D495 and D501. One can recognise a KH domain in the interval 562-621; the sequence is PRLLSFRIDPELIGTVIGPGGRTIKGITERTNTKIDIEDGGIVTIASHDGAAAEEAQKII. The S1 motif domain maps to 631–699; that stretch reads GEIFSGVVTR…SRGRINLTLR (69 aa). Residues 701 to 721 are disordered; sequence VGQNNGMSYPEPTPTPVAPLN. Pro residues predominate over residues 711–721; the sequence is EPTPTPVAPLN.

This sequence belongs to the polyribonucleotide nucleotidyltransferase family. Mg(2+) is required as a cofactor.

It localises to the cytoplasm. The enzyme catalyses RNA(n+1) + phosphate = RNA(n) + a ribonucleoside 5'-diphosphate. Its function is as follows. Involved in mRNA degradation. Catalyzes the phosphorolysis of single-stranded polyribonucleotides processively in the 3'- to 5'-direction. The polypeptide is Polyribonucleotide nucleotidyltransferase (Prochlorococcus marinus (strain MIT 9215)).